A 45-amino-acid chain; its full sequence is Somatoliberin (45 aa).

It belongs to the glucagon family.

It is found in the secreted. Its function is as follows. GRF is released by the hypothalamus and acts on the adenohypophyse to stimulate the secretion of growth hormone. The polypeptide is Somatoliberin (ghrh) (Cyprinus carpio (Common carp)).